A 69-amino-acid chain; its full sequence is Bowman-Birk type proteinase inhibitor A2 (69 aa).

Disulfide bonds link Cys-12-Cys-31, Cys-18-Cys-29, Cys-38-Cys-45, and Cys-42-Cys-59.

The protein belongs to the Bowman-Birk serine protease inhibitor family. In terms of tissue distribution, expressed in bulb (at protein level).

In terms of biological role, serine protease inhibitor. This chain is Bowman-Birk type proteinase inhibitor A2, found in Hyacinthus orientalis (Common hyacinth).